An 893-amino-acid chain; its full sequence is Alpha-actinin-1 (893 aa).

Residues 1 to 248 (MDHHYDPQQT…IMTYVSSFYH (248 aa)) are actin-binding. Residue Y13 is modified to Phosphotyrosine; by FAK1. Calponin-homology (CH) domains lie at 32–136 (KQQR…LRFA) and 145–251 (TSAK…HAFS). Spectrin repeat units lie at residues 275-385 (QLME…WLLN), 395-500 (HLAE…ALER), 510-621 (QLYL…ALME), and 631-734 (RLRK…EVEN). 2 consecutive EF-hand domains span residues 747-782 (EQMNEFRASFNHFDRDHSGTLGPEEFKACLISLGYD) and 788-823 (QGEAEFARIMSIVDPNRMGVVTFQAFIDFMSRETAD). The Ca(2+) site is built by D760, D762, S764, T766, and E771.

Belongs to the alpha-actinin family. Homodimer; antiparallel. Interacts with PDLIM4 (via PDZ domain).

The protein resides in the cytoplasm. It is found in the cytoskeleton. Its subcellular location is the myofibril. The protein localises to the sarcomere. It localises to the z line. The protein resides in the cell membrane. It is found in the cell junction. Its subcellular location is the cell projection. The protein localises to the ruffle. F-actin cross-linking protein is thought to anchor actin to a variety of intracellular structures. This is a bundling protein. The polypeptide is Alpha-actinin-1 (ACTN1) (Gallus gallus (Chicken)).